A 534-amino-acid chain; its full sequence is GPI transamidase component GPI17 (534 aa).

Over 1 to 8 (MSNANLRK) the chain is Cytoplasmic. Residues 9–29 (WVGFCFVAIYLFLGVPLWYKL) traverse the membrane as a helical segment. Over 30–472 (TTVYRASLPI…VQQNFFPQEH (443 aa)) the chain is Lumenal. N100, N170, N228, N247, and N299 each carry an N-linked (GlcNAc...) asparagine glycan. The helical transmembrane segment at 473-493 (MIAVYLPLLGPISAVMFFGFY) threads the bilayer. At 494–534 (NVMKEKNQKSKKNGTEREVAKEKLELKEAQKLHAIDGEDEL) the chain is on the cytoplasmic side.

The protein belongs to the PIGS family. In terms of assembly, forms a complex with CDC91, GPI16, GPI8 and GAA1. N-glycosylated.

Its subcellular location is the endoplasmic reticulum membrane. The protein operates within glycolipid biosynthesis; glycosylphosphatidylinositol-anchor biosynthesis. Component of the GPI transamidase complex. Involved in transfer of GPI to proteins. The polypeptide is GPI transamidase component GPI17 (GPI17) (Saccharomyces cerevisiae (strain ATCC 204508 / S288c) (Baker's yeast)).